Consider the following 700-residue polypeptide: Protein UL29/28 (700 aa).

A disordered region spans residues 1–30 (MSGRRKGCSAATASSSSSSPPSRLPLPGHA). Over residues 9 to 21 (SAATASSSSSSPP) the composition is skewed to low complexity.

This sequence belongs to the herpesviridae US22 family. As to quaternary structure, interacts with UL38 and host HDAC1; these interactions are necessary for the HDAC1 interaction with UL38. Interacts with host MTA2.

Its subcellular location is the virion. The protein resides in the host nucleus. It is found in the host cytoplasm. Functionally, contributes to activation of immediate-early gene expression. The polypeptide is Protein UL29/28 (UL29) (Human cytomegalovirus (strain Merlin) (HHV-5)).